We begin with the raw amino-acid sequence, 125 residues long: MARISNVNVPTNKRVMIGLTYIYGIGRSTAQKICQEVQVSVNKKVKDLSNQELVALRSIIESKYKVEGDLRREINLNIKKKKDIRCYEGLRHIRKLPVRGQNTHSNARTRKGKAIAIAGKKKPNK.

It belongs to the universal ribosomal protein uS13 family. As to quaternary structure, part of the 30S ribosomal subunit. Forms a loose heterodimer with protein S19. Forms two bridges to the 50S subunit in the 70S ribosome.

In terms of biological role, located at the top of the head of the 30S subunit, it contacts several helices of the 16S rRNA. In the 70S ribosome it contacts the 23S rRNA (bridge B1a) and protein L5 of the 50S subunit (bridge B1b), connecting the 2 subunits; these bridges are implicated in subunit movement. Contacts the tRNAs in the A and P-sites. The polypeptide is Small ribosomal subunit protein uS13 (Orientia tsutsugamushi (strain Ikeda) (Rickettsia tsutsugamushi)).